The following is a 177-amino-acid chain: NAD(P)H-quinone oxidoreductase subunit 6, chloroplastic (177 aa).

The next 5 membrane-spanning stretches (helical) occupy residues 10–30 (IFLV…VLLT), 32–52 (PVYS…FHIP), 61–81 (AQLL…VMFM), 92–112 (LWTV…FSLI), and 152–172 (FYLP…GAIA).

This sequence belongs to the complex I subunit 6 family. As to quaternary structure, NDH is composed of at least 16 different subunits, 5 of which are encoded in the nucleus.

Its subcellular location is the plastid. The protein localises to the chloroplast thylakoid membrane. The enzyme catalyses a plastoquinone + NADH + (n+1) H(+)(in) = a plastoquinol + NAD(+) + n H(+)(out). The catalysed reaction is a plastoquinone + NADPH + (n+1) H(+)(in) = a plastoquinol + NADP(+) + n H(+)(out). NDH shuttles electrons from NAD(P)H:plastoquinone, via FMN and iron-sulfur (Fe-S) centers, to quinones in the photosynthetic chain and possibly in a chloroplast respiratory chain. The immediate electron acceptor for the enzyme in this species is believed to be plastoquinone. Couples the redox reaction to proton translocation, and thus conserves the redox energy in a proton gradient. The chain is NAD(P)H-quinone oxidoreductase subunit 6, chloroplastic (ndhG) from Illicium oligandrum (Star anise).